We begin with the raw amino-acid sequence, 325 residues long: Intelectin (325 aa).

A signal peptide spans 1–23 (MKYCVLLIMIHLLLVELPQFPEA). Positions 44–266 (IRSSYIGRSC…AAMAICSGVK (223 aa)) constitute a Fibrinogen C-terminal domain. A disulfide bridge connects residues Cys-53 and Cys-82. Positions 98, 99, 101, 104, 109, 110, 145, 274, 286, and 294 each coordinate Ca(2+). Intrachain disulfides connect Cys-106-Cys-292 and Cys-262-Cys-277. A carbohydrate-binding positions include 274-275 (EH) and Glu-286.

As to expression, expressed at high levels in caudal kidney, liver, and swim bladder. Also expressed in gill, spleen, intestine and head kidney. Not detected in heart.

Its function is as follows. May be involved in innate immune surveillance. May specifically recognize carbohydrate chains of pathogens and bacterial components in a calcium-dependent manner. In vitro binds N-acetylglucosamine residues. This Oncorhynchus mykiss (Rainbow trout) protein is Intelectin.